The following is a 238-amino-acid chain: Large ribosomal subunit protein uL1 (238 aa).

This sequence belongs to the universal ribosomal protein uL1 family. As to quaternary structure, part of the 50S ribosomal subunit.

Its function is as follows. Binds directly to 23S rRNA. The L1 stalk is quite mobile in the ribosome, and is involved in E site tRNA release. In terms of biological role, protein L1 is also a translational repressor protein, it controls the translation of the L11 operon by binding to its mRNA. The protein is Large ribosomal subunit protein uL1 of Picosynechococcus sp. (strain ATCC 27264 / PCC 7002 / PR-6) (Agmenellum quadruplicatum).